The following is a 497-amino-acid chain: Casein kinase I isoform delta (497 aa).

Disordered stretches follow at residues 1–58 (MATM…EEMN) and 86–109 (PIQQ…HPTQ). Residues 14-34 (WHNNTSTPMDTTEPATNSHNP) show a composition bias toward polar residues. Low complexity predominate over residues 88–105 (QQHQQPPLLQQAQPSQIP). Residues 191–458 (FRLGRKIGSG…YLRNLFRTLF (268 aa)) enclose the Protein kinase domain. ATP is bound by residues 197–205 (IGSGSFGDI) and Lys-220. The active-site Proton acceptor is Asp-310.

The protein belongs to the protein kinase superfamily. CK1 Ser/Thr protein kinase family. Casein kinase I subfamily. In terms of assembly, monomer. As to expression, expressed throughout larval development and into the adult stage in both hypodermal seam cells and the hermaphrodite specific neuron.

Its subcellular location is the cytoplasm. It localises to the nucleus. It is found in the chromosome. The protein localises to the centromere. The protein resides in the cell junction. Its subcellular location is the adherens junction. It carries out the reaction L-seryl-[protein] + ATP = O-phospho-L-seryl-[protein] + ADP + H(+). The enzyme catalyses L-threonyl-[protein] + ATP = O-phospho-L-threonyl-[protein] + ADP + H(+). Its activity is regulated as follows. Exhibits substrate-dependent heparin activation. Essential serine/threonine-protein kinase that regulates diverse cellular growth and survival processes including Wnt signaling, DNA repair and circadian rhythms. Casein kinases are operationally defined by their preferential utilization of acidic proteins. Positively regulates the expression of components of the heterochronic pathway, which regulate developmental timing, such as the transcriptional repressor lin-42 and microRNAs such as let-7. Negatively regulates cell cycle exit and cell fusion to prevent the premature differentiation of hypodermal seam cells into adult cells. Plays a role in regulating axon branching and subsequently, the maturation of the nervous system, most likely by preventing the premature termination of transcripts for proteins such as Ankyrin/unc-44, which are required for maintaining the nervous system. May phosphorylate ssup-72 to promote nervous system maturation. In Caenorhabditis elegans, this protein is Casein kinase I isoform delta.